The sequence spans 1049 residues: Retinoblastoma-like protein 1 (1049 aa).

A phosphothreonine mark is found at Thr-332, Thr-369, and Thr-385. Residues Thr-385 to Lys-584 are domain A. A pocket; binds T and E1A region spans residues Thr-385–Tyr-944. The spacer stretch occupies residues Val-585 to Ser-779. Phosphoserine occurs at positions 640, 650, 748, and 761. A domain B region spans residues Lys-780–Tyr-944. 3 positions are modified to phosphoserine: Ser-959, Ser-970, and Ser-983. Thr-992 carries the phosphothreonine modification. 2 positions are modified to phosphoserine: Ser-1004 and Ser-1022.

The protein belongs to the retinoblastoma protein (RB) family. Component of the DREAM complex (also named LINC complex) at least composed of E2F4, E2F5, LIN9, LIN37, LIN52, LIN54, MYBL1, MYBL2, RBL1, RBL2, RBBP4, TFDP1 and TFDP2. The complex exists in quiescent cells where it represses cell cycle-dependent genes. It dissociates in S phase when LIN9, LIN37, LIN52 and LIN54 form a subcomplex that binds to MYBL2. Interacts with AATF. Interacts with KDM5A. Interacts with KMT5B and KMT5C. Interacts with USP4. Interacts with RBBP9. Cell-cycle arrest properties are inactivated by phosphorylation on Thr-332, Ser-640, Ser-959 and Ser-970 by CDK4.

It localises to the nucleus. Functionally, key regulator of entry into cell division. Directly involved in heterochromatin formation by maintaining overall chromatin structure and, in particular, that of constitutive heterochromatin by stabilizing histone methylation. Recruits and targets histone methyltransferases KMT5B and KMT5C, leading to epigenetic transcriptional repression. Controls histone H4 'Lys-20' trimethylation. Probably acts as a transcription repressor by recruiting chromatin-modifying enzymes to promoters. Potent inhibitor of E2F-mediated trans-activation. May act as a tumor suppressor. This is Retinoblastoma-like protein 1 from Rattus norvegicus (Rat).